The sequence spans 716 residues: Fatty acid oxidation complex subunit alpha (716 aa).

Residues 1-189 (MIYQSPTIQV…KVGAVDAVVA (189 aa)) are enoyl-CoA hydratase/isomerase. Substrate is bound at residue Asp296. Residues 311–716 (KDVKSAAVLG…AANNGSYYQA (406 aa)) are 3-hydroxyacyl-CoA dehydrogenase. Residues Met324, Asp343, 400–402 (VVE), Lys407, and Ser429 contribute to the NAD(+) site. His450 serves as the catalytic For 3-hydroxyacyl-CoA dehydrogenase activity. Asn453 contributes to the NAD(+) binding site. Residues Asn500 and Tyr660 each contribute to the substrate site.

This sequence in the N-terminal section; belongs to the enoyl-CoA hydratase/isomerase family. In the C-terminal section; belongs to the 3-hydroxyacyl-CoA dehydrogenase family. In terms of assembly, heterotetramer of two alpha chains (FadB) and two beta chains (FadA).

The enzyme catalyses a (3S)-3-hydroxyacyl-CoA + NAD(+) = a 3-oxoacyl-CoA + NADH + H(+). The catalysed reaction is a (3S)-3-hydroxyacyl-CoA = a (2E)-enoyl-CoA + H2O. It catalyses the reaction a 4-saturated-(3S)-3-hydroxyacyl-CoA = a (3E)-enoyl-CoA + H2O. It carries out the reaction (3S)-3-hydroxybutanoyl-CoA = (3R)-3-hydroxybutanoyl-CoA. The enzyme catalyses a (3Z)-enoyl-CoA = a 4-saturated (2E)-enoyl-CoA. The catalysed reaction is a (3E)-enoyl-CoA = a 4-saturated (2E)-enoyl-CoA. Its pathway is lipid metabolism; fatty acid beta-oxidation. Involved in the aerobic and anaerobic degradation of long-chain fatty acids via beta-oxidation cycle. Catalyzes the formation of 3-oxoacyl-CoA from enoyl-CoA via L-3-hydroxyacyl-CoA. It can also use D-3-hydroxyacyl-CoA and cis-3-enoyl-CoA as substrate. The chain is Fatty acid oxidation complex subunit alpha from Shewanella sp. (strain ANA-3).